A 318-amino-acid polypeptide reads, in one-letter code: Methionyl-tRNA formyltransferase (318 aa).

Position 110–113 (Ser110–Pro113) interacts with (6S)-5,6,7,8-tetrahydrofolate.

Belongs to the Fmt family.

It carries out the reaction L-methionyl-tRNA(fMet) + (6R)-10-formyltetrahydrofolate = N-formyl-L-methionyl-tRNA(fMet) + (6S)-5,6,7,8-tetrahydrofolate + H(+). In terms of biological role, attaches a formyl group to the free amino group of methionyl-tRNA(fMet). The formyl group appears to play a dual role in the initiator identity of N-formylmethionyl-tRNA by promoting its recognition by IF2 and preventing the misappropriation of this tRNA by the elongation apparatus. This is Methionyl-tRNA formyltransferase from Latilactobacillus sakei subsp. sakei (strain 23K) (Lactobacillus sakei subsp. sakei).